Consider the following 545-residue polypeptide: EH domain-containing protein 1 (545 aa).

EF-hand domains follow at residues 14-49 (ENQMIYKEWFEFSDSDGDGRITGNDAIKFFTMSNLP) and 50-83 (RPELKQIWAIADSKRQGYLGFKEFIVAMQLVSLA). Residues 15 to 93 (NQMIYKEWFE…QTGHEISHEV (79 aa)) form the EH domain. 8 residues coordinate Ca(2+): aspartate 27, aspartate 29, aspartate 31, arginine 33, aspartate 38, aspartate 61, tyrosine 67, and glutamate 72. Residues 194–429 (FDAKPMVMLL…DLLADLKDIP (236 aa)) form the Dynamin-type G domain. Positions 204-211 (GQYSTGKT) are G1 motif. 204–211 (GQYSTGKT) lines the GTP pocket. Positions 230–231 (EP) are G2 motif. The G3 motif stretch occupies residues 292-295 (DTPG). Residues 309-313 (DFTGV) and lysine 359 each bind GTP. Residues 358 to 361 (NKAD) are G4 motif. Residue valine 382 is a region of interest, G5 motif. 395–398 (SFSD) lines the GTP pocket. Residues 467-490 (KAKAQQKLIDNLEDEFGKVQREHH) are a coiled coil.

The protein belongs to the TRAFAC class dynamin-like GTPase superfamily. Dynamin/Fzo/YdjA family. EHD subfamily. Homooligomer, and heterooligomer with EHD2.

The protein resides in the endosome membrane. It localises to the cell membrane. The protein localises to the cytoplasm. It carries out the reaction GTP + H2O = GDP + phosphate + H(+). Involved in endocytosis positive regulation. Acts in early endocytic membrane fusion and membrane trafficking of recycling endosomes. Confers salt tolerance. The chain is EH domain-containing protein 1 from Arabidopsis thaliana (Mouse-ear cress).